Reading from the N-terminus, the 30-residue chain is Dicynthaurin (30 aa).

The residue at position 30 (T30) is a Threonine amide.

As to quaternary structure, homodimer.

It is found in the secreted. Shows antibacterial activity against both Gram-positive and Gram-negative bacteria. Its antimicrobial activity is optimal at NaCl concentrations below 100 mM, suggesting that the antimicrobial actions of this peptide may take place intracellularly rather than extracellularly. Has no activity against the fungus C.albicans. Has modest hemolytic activity. The sequence is that of Dicynthaurin from Halocynthia aurantium (Sea peach).